The sequence spans 221 residues: Eukaryotic translation initiation factor 3 subunit K (221 aa).

A PCI domain is found at 46–207 (YDLEANLACL…NIKTKHITEK (162 aa)).

It belongs to the eIF-3 subunit K family. As to quaternary structure, component of the eukaryotic translation initiation factor 3 (eIF-3) complex.

The protein localises to the cytoplasm. In terms of biological role, component of the eukaryotic translation initiation factor 3 (eIF-3) complex, which is involved in protein synthesis of a specialized repertoire of mRNAs and, together with other initiation factors, stimulates binding of mRNA and methionyl-tRNAi to the 40S ribosome. The eIF-3 complex specifically targets and initiates translation of a subset of mRNAs involved in cell proliferation. This Culex quinquefasciatus (Southern house mosquito) protein is Eukaryotic translation initiation factor 3 subunit K.